A 339-amino-acid chain; its full sequence is Annexin A2 (339 aa).

Residue serine 2 is modified to N-acetylserine. The segment at serine 2 to tyrosine 24 is S100A10-binding site. The residue at position 24 (tyrosine 24) is a Phosphotyrosine; by SRC. The residue at position 26 (serine 26) is a Phosphoserine; by PKC. Annexin repeat units follow at residues phenylalanine 33–lysine 104 and threonine 105–lysine 176. Residue lysine 49 is modified to N6-acetyllysine; alternate. Lysine 49 participates in a covalent cross-link: Glycyl lysine isopeptide (Lys-Gly) (interchain with G-Cter in SUMO1); alternate. Lysine 49 participates in a covalent cross-link: Glycyl lysine isopeptide (Lys-Gly) (interchain with G-Cter in SUMO2); alternate. The residue at position 152 (lysine 152) is an N6-acetyllysine. At serine 184 the chain carries Phosphoserine. Annexin repeat units lie at residues glutamate 189–glutamine 261 and asparagine 265–glycine 336. Phosphotyrosine is present on tyrosine 199. Lysine 227 bears the N6-acetyllysine mark.

The protein belongs to the annexin family. In terms of assembly, heterotetramer containing 2 light chains of S100A10/p11 and 2 heavy chains of ANXA2/p36. Interacts with ATP1B1. Interacts with DYSF. Interacts with COCH. Interacts (via repeat Annexin 1) with PCSK9 (via the C-terminal domain); the interaction inhibits the degradation of LDLR. Interacts with CEACAM1 (via the cytoplasmic domain); this interaction is regulated by phosphorylation of CEACAM1. Interacts with APPL2 and APPL1; targets APPL2 to endosomes and acting in parallel to RAB5A. Interacts with S100A4. May interact with UBAP2. Interacts with PLEKHG4B; this interaction is required for PLEKHG4B localization to cell-cell adhesions. Interacts with FAM13A. Interacts with salivary cystatin-L2 (via loop 2) from the tick Ixodes scapularis; the interaction results in reduced activation of mouse NLRC4 inflammasome formation upon Anaplasma phagocytophilum infection. In terms of processing, ISGylated.

Its subcellular location is the secreted. The protein localises to the extracellular space. It is found in the extracellular matrix. It localises to the basement membrane. The protein resides in the melanosome. Its subcellular location is the early endosome. Its function is as follows. Calcium-regulated membrane-binding protein whose affinity for calcium is greatly enhanced by anionic phospholipids. It binds two calcium ions with high affinity. May be involved in heat-stress response. Inhibits PCSK9-enhanced LDLR degradation, probably reduces PCSK9 protein levels via a translational mechanism but also competes with LDLR for binding with PCSK9. Binds to endosomes damaged by phagocytosis of particulate wear debris and participates in endosomal membrane stabilization, thereby limiting NLRP3 inflammasome activation. Required for endothelial cell surface plasmin generation and may support fibrinolytic surveillance and neoangiogenesis. Functionally, (Microbial infection) Regulates the formation of the NLRC4 inflammasome triggered by Anaplasma phagocytophilum infection. In terms of biological role, (Microbial infection) Protects against Klebsiella pneumoniae infection. Attenuates bacteria-induced pulmonary inflammation and promotes intro-abdominal pathogen clearance. Promotes anti-inflammatory responses by facilitating TLR4 internalization and translocation into early endosomal membranes; this leads to activation of TRAM-dependent endosomal signaling and release of anti-inflammatory cytokines. (Microbial infection) Promotes macrophage phagocytic efficiency towards Cryptococcus neoformans and ability to control fungal infection inside the cells. Its function is as follows. (Microbial infection) Contributes to protection against Pseudomonas aeruginosa infection by regulating autophagy via the AKT1-mTOR-ULK1/2 signaling pathway and activation of Rho GTPases via FAM13A-mediated mechanism. The chain is Annexin A2 (Anxa2) from Mus musculus (Mouse).